Consider the following 609-residue polypeptide: Phosphoenolpyruvate carboxykinase [GTP] (609 aa).

Substrate-binding positions include Arg81 and 220–222 (YGG). Lys229 and His249 together coordinate Mn(2+). Ser271 lines the substrate pocket. 272 to 277 (ACGKTN) is a binding site for GTP. Cys273 is an active-site residue. Mn(2+) is bound at residue Asp296. 387 to 389 (NSR) lines the substrate pocket. GTP-binding positions include Arg389, Arg420, and 515 to 518 (FGEN).

It belongs to the phosphoenolpyruvate carboxykinase [GTP] family. As to quaternary structure, monomer. Mn(2+) is required as a cofactor.

The protein resides in the cytoplasm. The enzyme catalyses oxaloacetate + GTP = phosphoenolpyruvate + GDP + CO2. The protein operates within carbohydrate biosynthesis; gluconeogenesis. Catalyzes the conversion of oxaloacetate (OAA) to phosphoenolpyruvate (PEP), the rate-limiting step in the metabolic pathway that produces glucose from lactate and other precursors derived from the citric acid cycle. The chain is Phosphoenolpyruvate carboxykinase [GTP] from Mycobacterium leprae (strain Br4923).